The following is a 368-amino-acid chain: Nuclease EXOG, mitochondrial (368 aa).

Residues 1–41 constitute a mitochondrion transit peptide; that stretch reads MAIKSIASRLRGSRRFLSGFVAGAVVGAAGAGLAALQFFRS. His-140 serves as the catalytic Proton acceptor. Asn-171 contributes to the a divalent metal cation binding site.

This sequence belongs to the DNA/RNA non-specific endonuclease family. Homodimer. Requires a divalent metal cation as cofactor. In terms of tissue distribution, ubiquitous.

Its subcellular location is the mitochondrion inner membrane. Its function is as follows. Endo/exonuclease with nicking activity towards supercoiled DNA, a preference for single-stranded DNA and 5'-3' exonuclease activity. This chain is Nuclease EXOG, mitochondrial (EXOG), found in Homo sapiens (Human).